The sequence spans 331 residues: Ketol-acid reductoisomerase (NADP(+)) (331 aa).

Positions 2 to 182 constitute a KARI N-terminal Rossmann domain; sequence AKMYYDQDAD…GGTKAGAIET (181 aa). NADP(+) contacts are provided by residues 25–28, serine 51, serine 53, and 83–86; these read FGSQ and DEKQ. Histidine 108 is an active-site residue. Glycine 134 provides a ligand contact to NADP(+). The KARI C-terminal knotted domain occupies 183-328; that stretch reads TFKEETETDL…KSLREMMPWL (146 aa). Aspartate 191, glutamate 195, glutamate 227, and glutamate 231 together coordinate Mg(2+). Serine 252 serves as a coordination point for substrate.

This sequence belongs to the ketol-acid reductoisomerase family. Requires Mg(2+) as cofactor.

It catalyses the reaction (2R)-2,3-dihydroxy-3-methylbutanoate + NADP(+) = (2S)-2-acetolactate + NADPH + H(+). The enzyme catalyses (2R,3R)-2,3-dihydroxy-3-methylpentanoate + NADP(+) = (S)-2-ethyl-2-hydroxy-3-oxobutanoate + NADPH + H(+). It participates in amino-acid biosynthesis; L-isoleucine biosynthesis; L-isoleucine from 2-oxobutanoate: step 2/4. Its pathway is amino-acid biosynthesis; L-valine biosynthesis; L-valine from pyruvate: step 2/4. Involved in the biosynthesis of branched-chain amino acids (BCAA). Catalyzes an alkyl-migration followed by a ketol-acid reduction of (S)-2-acetolactate (S2AL) to yield (R)-2,3-dihydroxy-isovalerate. In the isomerase reaction, S2AL is rearranged via a Mg-dependent methyl migration to produce 3-hydroxy-3-methyl-2-ketobutyrate (HMKB). In the reductase reaction, this 2-ketoacid undergoes a metal-dependent reduction by NADPH to yield (R)-2,3-dihydroxy-isovalerate. This is Ketol-acid reductoisomerase (NADP(+)) from Caldanaerobacter subterraneus subsp. tengcongensis (strain DSM 15242 / JCM 11007 / NBRC 100824 / MB4) (Thermoanaerobacter tengcongensis).